The following is a 219-amino-acid chain: Octanoyltransferase (219 aa).

The region spanning 34–209 (SESPDELWIV…TFSQLLGYQH (176 aa)) is the BPL/LPL catalytic domain. Substrate-binding positions include 73-80 (RGGQVTYH), 140-142 (SLG), and 153-155 (GLA). The active-site Acyl-thioester intermediate is cysteine 171.

It belongs to the LipB family.

The protein localises to the cytoplasm. The enzyme catalyses octanoyl-[ACP] + L-lysyl-[protein] = N(6)-octanoyl-L-lysyl-[protein] + holo-[ACP] + H(+). Its pathway is protein modification; protein lipoylation via endogenous pathway; protein N(6)-(lipoyl)lysine from octanoyl-[acyl-carrier-protein]: step 1/2. Functionally, catalyzes the transfer of endogenously produced octanoic acid from octanoyl-acyl-carrier-protein onto the lipoyl domains of lipoate-dependent enzymes. Lipoyl-ACP can also act as a substrate although octanoyl-ACP is likely to be the physiological substrate. This chain is Octanoyltransferase, found in Shewanella putrefaciens (strain CN-32 / ATCC BAA-453).